The primary structure comprises 282 residues: MALPLAFLFTSPGPVLVEIGPITIRWYGLLIATAVLIGVSLSQYLAKRRQVNPDLLSDLSIWLVIGAIPAARIYYVLFQWSEYAQHPERIIAIWQGGIAIHGAIIGGTLAALIFAKLKRVPFWQLADLVAPSLILGQAIGRWGNFFNSEAFGRPTNLPWKLYIPIERRPPDLASFEYFHPTFLYESIWDLMVFALLITLFFRSLAGKPRLKVGTLFMVYLATYSLGRLWIEGLRTDSLMLGPLRIAQVVSLTGITLGLAGLAWLYVRKRPLPDVVSSPKDTE.

Helical transmembrane passes span 19–39 (IGPI…LIGV), 59–79 (LSIW…VLFQ), 90–110 (IIAI…GTLA), and 120–140 (VPFW…QAIG). Arg-141 provides a ligand contact to a 1,2-diacyl-sn-glycero-3-phospho-(1'-sn-glycerol). Helical transmembrane passes span 181 to 201 (TFLY…TLFF), 212 to 232 (VGTL…WIEG), and 245 to 265 (IAQV…AWLY).

It belongs to the Lgt family.

It is found in the cell inner membrane. The catalysed reaction is L-cysteinyl-[prolipoprotein] + a 1,2-diacyl-sn-glycero-3-phospho-(1'-sn-glycerol) = an S-1,2-diacyl-sn-glyceryl-L-cysteinyl-[prolipoprotein] + sn-glycerol 1-phosphate + H(+). Its pathway is protein modification; lipoprotein biosynthesis (diacylglyceryl transfer). In terms of biological role, catalyzes the transfer of the diacylglyceryl group from phosphatidylglycerol to the sulfhydryl group of the N-terminal cysteine of a prolipoprotein, the first step in the formation of mature lipoproteins. The protein is Phosphatidylglycerol--prolipoprotein diacylglyceryl transferase of Trichormus variabilis (strain ATCC 29413 / PCC 7937) (Anabaena variabilis).